The chain runs to 669 residues: Probable L-type lectin-domain containing receptor kinase I.2 (669 aa).

An N-terminal signal peptide occupies residues 1–24; the sequence is MAQRFYLLLLLLIFLVNLICFSSQ. At 25-295 the chain is on the extracellular side; sequence QDLSFVFNGF…FTEQKRKRSP (271 aa). Positions 26–266 are legume-lectin like; sequence DLSFVFNGFN…NQYILGWSFS (241 aa). Residues N132, N189, N212, and N233 are each glycosylated (N-linked (GlcNAc...) asparagine). The chain crosses the membrane as a helical span at residues 296–316; the sequence is LLIVLLVILTLVVIGGLGGYY. The Cytoplasmic segment spans residues 317 to 669; the sequence is LYRRKKYAEV…SHTILNGDGR (353 aa). Residues 351–609 form the Protein kinase domain; sequence FNKDGRLGKG…MQYINRDQAL (259 aa). ATP-binding positions include 357–365 and K379; that span reads LGKGGFGEV. D475 functions as the Proton acceptor in the catalytic mechanism.

The protein in the C-terminal section; belongs to the protein kinase superfamily. Ser/Thr protein kinase family. This sequence in the N-terminal section; belongs to the leguminous lectin family.

It is found in the cell membrane. The enzyme catalyses L-seryl-[protein] + ATP = O-phospho-L-seryl-[protein] + ADP + H(+). It carries out the reaction L-threonyl-[protein] + ATP = O-phospho-L-threonyl-[protein] + ADP + H(+). In terms of biological role, involved in resistance response to the pathogenic fungus Alternaria brassicicola. The chain is Probable L-type lectin-domain containing receptor kinase I.2 from Arabidopsis thaliana (Mouse-ear cress).